A 466-amino-acid polypeptide reads, in one-letter code: UDP-N-acetylmuramoylalanine--D-glutamate ligase (466 aa).

Residue 117–123 coordinates ATP; the sequence is GTKGKTT.

It belongs to the MurCDEF family.

The protein localises to the cytoplasm. The enzyme catalyses UDP-N-acetyl-alpha-D-muramoyl-L-alanine + D-glutamate + ATP = UDP-N-acetyl-alpha-D-muramoyl-L-alanyl-D-glutamate + ADP + phosphate + H(+). The protein operates within cell wall biogenesis; peptidoglycan biosynthesis. In terms of biological role, cell wall formation. Catalyzes the addition of glutamate to the nucleotide precursor UDP-N-acetylmuramoyl-L-alanine (UMA). This Roseiflexus sp. (strain RS-1) protein is UDP-N-acetylmuramoylalanine--D-glutamate ligase.